A 479-amino-acid polypeptide reads, in one-letter code: GTPase Obg (479 aa).

Residues 2-159 (PRFVDRVVIH…RDLTLELKTV (158 aa)) form the Obg domain. Residues 160 to 340 (ADVGLVGFPS…LIFGLWQMVS (181 aa)) enclose the OBG-type G domain. Residues 166–173 (GFPSAGKS), 191–195 (FTTLV), 212–215 (DVPG), 292–295 (NKID), and 321–323 (STV) contribute to the GTP site. Positions 173 and 193 each coordinate Mg(2+). The region spanning 358 to 436 (PVPVDDSGFD…IGEMTFDWEP (79 aa)) is the OCT domain. The segment at 438–479 (TPAGGHVAMSGRGTDVRLERSDRVGAAERKAARRQRRERDDD) is disordered. Over residues 451 to 467 (TDVRLERSDRVGAAERK) the composition is skewed to basic and acidic residues.

This sequence belongs to the TRAFAC class OBG-HflX-like GTPase superfamily. OBG GTPase family. Monomer. It depends on Mg(2+) as a cofactor.

The protein localises to the cytoplasm. An essential GTPase which binds GTP, GDP and possibly (p)ppGpp with moderate affinity, with high nucleotide exchange rates and a fairly low GTP hydrolysis rate. Plays a role in control of the cell cycle, stress response, ribosome biogenesis and in those bacteria that undergo differentiation, in morphogenesis control. The polypeptide is GTPase Obg (Mycobacterium ulcerans (strain Agy99)).